The following is a 185-amino-acid chain: MSPVDRLREALPDAARDVRLNLQAVLQGGALTEGQRWGVAVASAAAARQPALLSAVLAEARSRGLDSAAEDGLAAAALMAMNNVYYRFRHMVGKPGYTEMPARLRMGRLAQPATSRADLELFSLAASAINGCEACVRTHEDVVVKGGIGEEAVHDAVRIAAVIHAAAVALEAGEVAGGHEAVSAA.

The active-site Proton donor is the Cys-132. The cysteines at positions 132 and 135 are disulfide-linked. The active-site Cysteine sulfenic acid (-SOH) intermediate is the Cys-135.

Belongs to the AhpD family.

It catalyses the reaction N(6)-[(R)-dihydrolipoyl]-L-lysyl-[lipoyl-carrier protein] + a hydroperoxide = N(6)-[(R)-lipoyl]-L-lysyl-[lipoyl-carrier protein] + an alcohol + H2O. Its function is as follows. Antioxidant protein with alkyl hydroperoxidase activity. Required for the reduction of the AhpC active site cysteine residues and for the regeneration of the AhpC enzyme activity. The polypeptide is Alkyl hydroperoxide reductase AhpD (Anaeromyxobacter sp. (strain Fw109-5)).